Here is a 253-residue protein sequence, read N- to C-terminus: Ubiquinone/menaquinone biosynthesis C-methyltransferase UbiE (253 aa).

S-adenosyl-L-methionine-binding positions include T76, D97, and 125–126; that span reads NA.

It belongs to the class I-like SAM-binding methyltransferase superfamily. MenG/UbiE family.

The catalysed reaction is a 2-demethylmenaquinol + S-adenosyl-L-methionine = a menaquinol + S-adenosyl-L-homocysteine + H(+). It carries out the reaction a 2-methoxy-6-(all-trans-polyprenyl)benzene-1,4-diol + S-adenosyl-L-methionine = a 5-methoxy-2-methyl-3-(all-trans-polyprenyl)benzene-1,4-diol + S-adenosyl-L-homocysteine + H(+). The protein operates within quinol/quinone metabolism; menaquinone biosynthesis; menaquinol from 1,4-dihydroxy-2-naphthoate: step 2/2. It participates in cofactor biosynthesis; ubiquinone biosynthesis. Its function is as follows. Methyltransferase required for the conversion of demethylmenaquinol (DMKH2) to menaquinol (MKH2) and the conversion of 2-polyprenyl-6-methoxy-1,4-benzoquinol (DDMQH2) to 2-polyprenyl-3-methyl-6-methoxy-1,4-benzoquinol (DMQH2). This is Ubiquinone/menaquinone biosynthesis C-methyltransferase UbiE from Bradyrhizobium diazoefficiens (strain JCM 10833 / BCRC 13528 / IAM 13628 / NBRC 14792 / USDA 110).